The sequence spans 388 residues: Dual-specificity RNA methyltransferase RlmN (388 aa).

The active-site Proton acceptor is the glutamate 109. The 240-residue stretch at 115-354 folds into the Radical SAM core domain; sequence EDDRATLCVS…TIVRKTRGDD (240 aa). An intrachain disulfide couples cysteine 122 to cysteine 359. Residues cysteine 129, cysteine 133, and cysteine 136 each contribute to the [4Fe-4S] cluster site. Residues 183–184, serine 215, 237–239, and asparagine 316 contribute to the S-adenosyl-L-methionine site; these read GE and SLH. Cysteine 359 functions as the S-methylcysteine intermediate in the catalytic mechanism.

The protein belongs to the radical SAM superfamily. RlmN family. Requires [4Fe-4S] cluster as cofactor.

Its subcellular location is the cytoplasm. It carries out the reaction adenosine(2503) in 23S rRNA + 2 reduced [2Fe-2S]-[ferredoxin] + 2 S-adenosyl-L-methionine = 2-methyladenosine(2503) in 23S rRNA + 5'-deoxyadenosine + L-methionine + 2 oxidized [2Fe-2S]-[ferredoxin] + S-adenosyl-L-homocysteine. It catalyses the reaction adenosine(37) in tRNA + 2 reduced [2Fe-2S]-[ferredoxin] + 2 S-adenosyl-L-methionine = 2-methyladenosine(37) in tRNA + 5'-deoxyadenosine + L-methionine + 2 oxidized [2Fe-2S]-[ferredoxin] + S-adenosyl-L-homocysteine. Specifically methylates position 2 of adenine 2503 in 23S rRNA and position 2 of adenine 37 in tRNAs. m2A2503 modification seems to play a crucial role in the proofreading step occurring at the peptidyl transferase center and thus would serve to optimize ribosomal fidelity. The protein is Dual-specificity RNA methyltransferase RlmN of Salmonella arizonae (strain ATCC BAA-731 / CDC346-86 / RSK2980).